A 277-amino-acid polypeptide reads, in one-letter code: tRNA U34 carboxymethyltransferase (277 aa).

Residues K46, W60, K65, G84, D106–S108, V133–E134, Y153, and R268 contribute to the carboxy-S-adenosyl-L-methionine site.

This sequence belongs to the class I-like SAM-binding methyltransferase superfamily. CmoB family. As to quaternary structure, homotetramer.

It catalyses the reaction carboxy-S-adenosyl-L-methionine + 5-hydroxyuridine(34) in tRNA = 5-carboxymethoxyuridine(34) in tRNA + S-adenosyl-L-homocysteine + H(+). Its function is as follows. Catalyzes carboxymethyl transfer from carboxy-S-adenosyl-L-methionine (Cx-SAM) to 5-hydroxyuridine (ho5U) to form 5-carboxymethoxyuridine (cmo5U) at position 34 in tRNAs. This is tRNA U34 carboxymethyltransferase from Wolinella succinogenes (strain ATCC 29543 / DSM 1740 / CCUG 13145 / JCM 31913 / LMG 7466 / NCTC 11488 / FDC 602W) (Vibrio succinogenes).